A 331-amino-acid chain; its full sequence is Biotin synthase (331 aa).

The region spanning 43–267 is the Radical SAM core domain; that stretch reads NTVQVSTLLS…LMPASYVRLS (225 aa). [4Fe-4S] cluster contacts are provided by Cys-58, Cys-62, and Cys-65. [2Fe-2S] cluster contacts are provided by Cys-102, Cys-133, Cys-193, and Arg-265.

Belongs to the radical SAM superfamily. Biotin synthase family. As to quaternary structure, homodimer. The cofactor is [4Fe-4S] cluster. Requires [2Fe-2S] cluster as cofactor.

The enzyme catalyses (4R,5S)-dethiobiotin + (sulfur carrier)-SH + 2 reduced [2Fe-2S]-[ferredoxin] + 2 S-adenosyl-L-methionine = (sulfur carrier)-H + biotin + 2 5'-deoxyadenosine + 2 L-methionine + 2 oxidized [2Fe-2S]-[ferredoxin]. Its pathway is cofactor biosynthesis; biotin biosynthesis; biotin from 7,8-diaminononanoate: step 2/2. In terms of biological role, catalyzes the conversion of dethiobiotin (DTB) to biotin by the insertion of a sulfur atom into dethiobiotin via a radical-based mechanism. The polypeptide is Biotin synthase (Alkalilimnicola ehrlichii (strain ATCC BAA-1101 / DSM 17681 / MLHE-1)).